A 365-amino-acid chain; its full sequence is Isopentenyl-diphosphate delta-isomerase (365 aa).

Residue 8-9 (RK) coordinates substrate. FMN contacts are provided by residues 67–69 (SIT), Ser-97, and Asn-126. 97–99 (SQR) is a binding site for substrate. Gln-160 is a binding site for substrate. Glu-161 lines the Mg(2+) pocket. Residues Lys-192, Thr-222, 272–274 (GIR), and 293–294 (AL) each bind FMN.

The protein belongs to the IPP isomerase type 2 family. Homooctamer. Dimer of tetramers. The cofactor is FMN. It depends on NADPH as a cofactor. Mg(2+) is required as a cofactor.

Its subcellular location is the cytoplasm. It catalyses the reaction isopentenyl diphosphate = dimethylallyl diphosphate. Involved in the biosynthesis of isoprenoids. Catalyzes the 1,3-allylic rearrangement of the homoallylic substrate isopentenyl (IPP) to its allylic isomer, dimethylallyl diphosphate (DMAPP). The protein is Isopentenyl-diphosphate delta-isomerase of Methanosarcina barkeri (strain Fusaro / DSM 804).